The following is a 327-amino-acid chain: uncharacterized protein (327 aa).

In terms of domain architecture, S4 RNA-binding spans 32 to 105 (VRLDKWLAEQ…IPLDILYEDE (74 aa)). Asp-156 is an active-site residue.

It belongs to the pseudouridine synthase RluA family.

It catalyses the reaction a uridine in RNA = a pseudouridine in RNA. This is an uncharacterized protein from Synechocystis sp. (strain ATCC 27184 / PCC 6803 / Kazusa).